The primary structure comprises 86 residues: uncharacterized protein (86 aa).

This is an uncharacterized protein from African swine fever virus (strain Badajoz 1971 Vero-adapted) (Ba71V).